The primary structure comprises 691 residues: 1-butanol dehydrogenase (cytochrome c) (691 aa).

The first 38 residues, 1–38, serve as a signal peptide directing secretion; sequence MLTTTFARKREESVPLRKGIQRALLGLSCLVLSTTSFA. E84 contributes to the pyrroloquinoline quinone binding site. C130 and C131 are oxidised to a cystine. Pyrroloquinoline quinone is bound by residues R136, T181, and 197–198; that span reads GA. Residues E199 and D322 each contribute to the Ca(2+) site. The active-site Proton acceptor is D322. Pyrroloquinoline quinone-binding positions include K349, 408-409, and V558; that span reads NW. In terms of domain architecture, Cytochrome c spans 605–684; it reads DDVAEGTGLY…KIKAFILGTA (80 aa). Positions 618, 621, 622, and 661 each coordinate heme c.

The protein belongs to the bacterial PQQ dehydrogenase family. In terms of assembly, monomer. It depends on pyrroloquinoline quinone as a cofactor. Ca(2+) serves as cofactor. Requires heme c as cofactor.

It localises to the periplasm. The catalysed reaction is butan-1-ol + 2 Fe(III)-[cytochrome c] = butanal + 2 Fe(II)-[cytochrome c] + 2 H(+). Its activity is regulated as follows. Dehydrogenase activity is increased by ammonium ions. Its function is as follows. Involved in the metabolism of butane. Could be important in the detoxification of 1-butanol. Catalyzes the oxidation of 1-butanol to butyraldehyde. Also able to use 1-propanol, 2-pentanol, propionaldehyde and butyraldehyde as substrates. In Thauera butanivorans (strain ATCC 43655 / DSM 2080 / JCM 20651 / CCUG 51053 / NBRC 103042 / IAM 12574 / Bu B1211) (Pseudomonas butanovora), this protein is 1-butanol dehydrogenase (cytochrome c).